Here is a 432-residue protein sequence, read N- to C-terminus: Adenylosuccinate synthetase (432 aa).

GTP is bound by residues 13 to 19 (GDEGKGK) and 41 to 43 (GHT). The active-site Proton acceptor is the D14. Positions 14 and 41 each coordinate Mg(2+). Residues 14–17 (DEGK), 39–42 (NAGH), T130, R144, Q225, T240, and R304 contribute to the IMP site. The active-site Proton donor is the H42. 300 to 306 (ATTGRSR) provides a ligand contact to substrate. GTP contacts are provided by residues R306, 332 to 334 (KLD), and 415 to 417 (STG).

The protein belongs to the adenylosuccinate synthetase family. Homodimer. Mg(2+) serves as cofactor.

It localises to the cytoplasm. The catalysed reaction is IMP + L-aspartate + GTP = N(6)-(1,2-dicarboxyethyl)-AMP + GDP + phosphate + 2 H(+). It participates in purine metabolism; AMP biosynthesis via de novo pathway; AMP from IMP: step 1/2. In terms of biological role, plays an important role in the de novo pathway of purine nucleotide biosynthesis. Catalyzes the first committed step in the biosynthesis of AMP from IMP. The polypeptide is Adenylosuccinate synthetase (Marinomonas sp. (strain MWYL1)).